We begin with the raw amino-acid sequence, 551 residues long: Palatinase (551 aa).

The active-site Nucleophile is Asp-201. Catalysis depends on Glu-243, which acts as the Proton donor.

This sequence belongs to the glycosyl hydrolase 13 family.

It carries out the reaction 6-O-alpha-D-glucopyranosyl-D-fructose + H2O = alpha-D-glucose + D-fructose. It functions in the pathway glycan degradation; palatinose degradation. Functionally, catalyzes the hydrolysis of palatinose. Shows a strict specificity toward palatinose, and cannot release glucose from the disaccharides sucrose, maltose, trehalose and melibiose. Involved in the degradation of palatinose, a sucrose isomer that is formed as a reserve material under conditions of excess carbon availability, sequestered in a form unavailable to competitors such as fungi or the host plant, and whose consumption appears to be postponed until the preferentially metabolized carbon source (e.g. sucrose) is depleted. This Erwinia rhapontici (Pectobacterium rhapontici) protein is Palatinase.